Consider the following 195-residue polypeptide: dTTP/UTP pyrophosphatase (195 aa).

The Proton acceptor role is filled by Asp-73.

It belongs to the Maf family. YhdE subfamily. The cofactor is a divalent metal cation.

It localises to the cytoplasm. The enzyme catalyses dTTP + H2O = dTMP + diphosphate + H(+). It catalyses the reaction UTP + H2O = UMP + diphosphate + H(+). Nucleoside triphosphate pyrophosphatase that hydrolyzes dTTP and UTP. May have a dual role in cell division arrest and in preventing the incorporation of modified nucleotides into cellular nucleic acids. This Exiguobacterium sibiricum (strain DSM 17290 / CCUG 55495 / CIP 109462 / JCM 13490 / 255-15) protein is dTTP/UTP pyrophosphatase.